A 146-amino-acid polypeptide reads, in one-letter code: D-aminoacyl-tRNA deacylase (146 aa).

The short motif at 137 to 138 is the Gly-cisPro motif, important for rejection of L-amino acids element; it reads GP.

Belongs to the DTD family. As to quaternary structure, homodimer.

It localises to the cytoplasm. It carries out the reaction glycyl-tRNA(Ala) + H2O = tRNA(Ala) + glycine + H(+). The enzyme catalyses a D-aminoacyl-tRNA + H2O = a tRNA + a D-alpha-amino acid + H(+). Functionally, an aminoacyl-tRNA editing enzyme that deacylates mischarged D-aminoacyl-tRNAs. Also deacylates mischarged glycyl-tRNA(Ala), protecting cells against glycine mischarging by AlaRS. Acts via tRNA-based rather than protein-based catalysis; rejects L-amino acids rather than detecting D-amino acids in the active site. By recycling D-aminoacyl-tRNA to D-amino acids and free tRNA molecules, this enzyme counteracts the toxicity associated with the formation of D-aminoacyl-tRNA entities in vivo and helps enforce protein L-homochirality. The protein is D-aminoacyl-tRNA deacylase of Bacillus thuringiensis (strain Al Hakam).